A 491-amino-acid polypeptide reads, in one-letter code: Probable aspartyl aminopeptidase (491 aa).

Histidine 90 contributes to the Zn(2+) binding site. Histidine 168 provides a ligand contact to substrate. Residue aspartate 278 participates in Zn(2+) binding. Residue glutamate 315 participates in substrate binding. Residues glutamate 316 and aspartate 361 each contribute to the Zn(2+) site. The substrate site is built by aspartate 361, histidine 364, lysine 389, and tyrosine 396. Histidine 455 contacts Zn(2+).

The protein belongs to the peptidase M18 family. In terms of assembly, tetrahedron-shaped homododecamer built from six homodimers. Zn(2+) is required as a cofactor.

The protein localises to the cytoplasm. It carries out the reaction Release of an N-terminal aspartate or glutamate from a peptide, with a preference for aspartate.. Functionally, likely to play an important role in intracellular protein and peptide metabolism. The chain is Probable aspartyl aminopeptidase from Ricinus communis (Castor bean).